The primary structure comprises 2244 residues: Multifunctional protein ura1 (2244 aa).

The interval 1-437 is GATase (Glutamine amidotransferase); that stretch reads MSGLLPSLSS…GPRDTEFLFD (437 aa). The disordered stretch occupies residues 16–44; the sequence is QSEALGMPRTHGPKPSENDPKEPTCSPSP. Residues S101, G309, and G311 each contribute to the L-glutamine site. In terms of domain architecture, Glutamine amidotransferase type-1 spans 264-449; sequence RILVIDVGMK…IDVVKRSADA (186 aa). The active-site Nucleophile; for GATase activity is C338. Residues Q342, N380, G382, and Y383 each coordinate L-glutamine. Catalysis depends on for GATase activity residues H422 and E424. A linker region spans residues 438–477; the sequence is VFIDVVKRSADAKSLQPFKLPGGTIEENRSRHPLVDAKRV. A CPSase A region spans residues 478 to 1014; it reads LILGSGGLSI…VEHDIHFNDK (537 aa). Residues 478 to 1514 form a CPSase (Carbamoyl phosphate synthase) region; it reads LILGSGGLSI…TNVKCAKLMI (1037 aa). Residues R594, R634, G640, G641, R671, M673, E678, G704, I705, H706, Q747, and E761 each coordinate ATP. The 193-residue stretch at 598–790 folds into the ATP-grasp 1 domain; that stretch reads ARAMDEINEK…LAFTAAKLGL (193 aa). The Mg(2+) site is built by Q747, E761, and N763. Residues Q747, E761, and N763 each contribute to the Mn(2+) site. Positions 1015–1514 are CPSase B; the sequence is GVMVLGSGVY…TNVKCAKLMI (500 aa). Position 1119 is a phosphoserine (S1119). One can recognise an ATP-grasp 2 domain in the interval 1133 to 1324; sequence SRMLDDIGVD…MISMATDVIM (192 aa). The ATP site is built by R1169, K1208, I1210, E1215, G1240, V1241, H1242, S1243, Q1283, and E1295. Positions 1283, 1295, and 1297 each coordinate Mg(2+). Mn(2+) contacts are provided by Q1283, E1295, and N1297. Residues 1390 to 1552 form the MGS-like domain; sequence FRLPKKNILI…INISAFLPEF (163 aa). Residues 1515 to 1524 form a linker region; sequence EAICRNLDFS. Residues 1525 to 1853 are defective DHOase domain; that stretch reads LSTVDFQSSF…FDGHDVFFDG (329 aa). Positions 1854 to 1935 are linker; it reads ELNFEHTYGR…VQLINSSPFY (82 aa). Phosphoserine occurs at positions 1881 and 1885. The interval 1936–2244 is ATCase (Aspartate transcarbamylase); that stretch reads RKHIISVHQV…CVMGATEVAN (309 aa). R1988 and T1989 together coordinate carbamoyl phosphate. K2016 contacts L-aspartate. Carbamoyl phosphate is bound by residues R2037, H2065, and Q2068. Positions 2098 and 2160 each coordinate L-aspartate. Residues L2199 and P2200 each coordinate carbamoyl phosphate.

This sequence in the N-terminal section; belongs to the CarA family. It in the 2nd section; belongs to the CarB family. The protein in the 3rd section; belongs to the metallo-dependent hydrolases superfamily. DHOase family. CAD subfamily. In the C-terminal section; belongs to the aspartate/ornithine carbamoyltransferase superfamily. ATCase family. Mg(2+) serves as cofactor. It depends on Mn(2+) as a cofactor.

It catalyses the reaction hydrogencarbonate + L-glutamine + 2 ATP + H2O = carbamoyl phosphate + L-glutamate + 2 ADP + phosphate + 2 H(+). The enzyme catalyses L-glutamine + H2O = L-glutamate + NH4(+). It carries out the reaction hydrogencarbonate + NH4(+) + 2 ATP = carbamoyl phosphate + 2 ADP + phosphate + 2 H(+). The catalysed reaction is carbamoyl phosphate + L-aspartate = N-carbamoyl-L-aspartate + phosphate + H(+). The protein operates within pyrimidine metabolism; UMP biosynthesis via de novo pathway; (S)-dihydroorotate from bicarbonate: step 1/3. It participates in pyrimidine metabolism; UMP biosynthesis via de novo pathway; (S)-dihydroorotate from bicarbonate: step 2/3. With respect to regulation, both CPSase and ATCase activities are feedback inhibited by the end product UTP. Its function is as follows. Multifunctional protein that encodes the first 2 enzymatic activities of the de novo pyrimidine pathway: carbamoylphosphate synthetase (CPSase; EC 6.3.5.5) and aspartate transcarbamylase (ATCase; EC 2.1.3.2). The CPSase-function is accomplished in 2 steps, by a glutamine-dependent amidotransferase activity (GATase) that binds and cleaves glutamine to produce ammonia, followed by an ammonium-dependent carbamoyl phosphate synthetase, which reacts with the ammonia, hydrogencarbonate and ATP to form carbamoyl phosphate. The endogenously produced carbamoyl phosphate is sequestered and channeled to the ATCase active site. ATCase then catalyzes the formation of carbamoyl-L-aspartate from L-aspartate and carbamoyl phosphate. In Schizosaccharomyces pombe (strain 972 / ATCC 24843) (Fission yeast), this protein is Multifunctional protein ura1 (ura1).